A 456-amino-acid chain; its full sequence is RuvB-like 1 (456 aa).

Lys2 is covalently cross-linked (Glycyl lysine isopeptide (Lys-Gly) (interchain with G-Cter in SUMO2)). 70-77 (GPPGTGKT) contributes to the ATP binding site. Lys225 participates in a covalent cross-link: Glycyl lysine isopeptide (Lys-Gly) (interchain with G-Cter in SUMO1); alternate. A Glycyl lysine isopeptide (Lys-Gly) (interchain with G-Cter in SUMO2); alternate cross-link involves residue Lys225. Residue Lys445 forms a Glycyl lysine isopeptide (Lys-Gly) (interchain with G-Cter in SUMO2) linkage. The residue at position 453 (Lys453) is an N6-acetyllysine.

It belongs to the RuvB family. Forms homohexameric rings. Can form a dodecamer with RUVBL2 made of two stacked hexameric rings; however, even though RUVBL1 and RUVBL2 are present in equimolar ratio, the oligomeric status of each hexamer is not known. Oligomerization may regulate binding to nucleic acids and conversely, binding to nucleic acids may affect the dodecameric assembly. Interaction of the complex with DHX34 results in conformational changes of the N-terminus of the RUVBL2 subunits, resulting in loss of nucleotide binding ability and ATP hydrolysis of the complex. Interacts with the transcriptional activation domain of MYC. Component of the RNA polymerase II holoenzyme complex. May also act to bridge the LEF1/TCF1-CTNNB1 complex and TBP. Component of the NuA4 histone acetyltransferase complex which contains the catalytic subunit KAT5/TIP60 and the subunits EP400, TRRAP/PAF400, BRD8/SMAP, EPC1, DMAP1/DNMAP1, RUVBL1/TIP49, RUVBL2, ING3, actin, ACTL6A/BAF53A, MORF4L1/MRG15, MORF4L2/MRGX, MRGBP, YEATS4/GAS41, VPS72/YL1 and MEAF6. The NuA4 complex interacts with MYC and the adenovirus E1A protein. RUVBL1 interacts with EP400. Component of a NuA4-related complex which contains EP400, TRRAP/PAF400, SRCAP, BRD8/SMAP, EPC1, DMAP1/DNMAP1, RUVBL1/TIP49, RUVBL2, actin, ACTL6A/BAF53A, VPS72 and YEATS4/GAS41. Component of the BAF53 complex, at least composed of ACTL6A/BAF53A, RUVBL1/TIP49, SMARCA2/BRM, and TRRAP/PAF400. Component of some MLL1/MLL complex, at least composed of the core components KMT2A/MLL1, ASH2L, HCFC1/HCF1, WDR5 and RBBP5, as well as the facultative components BACC1, CHD8, E2F6, HSP70, INO80C, KANSL1, LAS1L, MAX, MCRS1, MGA, MYST1/MOF, PELP1, PHF20, PRP31, RING2, RUVB1/TIP49A, RUVB2/TIP49B, SENP3, TAF1, TAF4, TAF6, TAF7, TAF9 and TEX10. Associates with alpha and gamma tubulins, particularly during metaphase and early anaphase. Interacts with NPAT. Component of the chromatin-remodeling INO80 complex; specifically part of a complex module associated with the helicase ATP-binding and the helicase C-terminal domain of INO80. Interacts with IGHMBP2. Interacts with OFD1. Interacts with HINT1. Component of a complex with USP49 and PSMC5. Component of a SWR1-like complex. Component of the R2TP complex composed at least of RUVBL1, RUVBL2, RPAP3 and PIHD1. Component of the PAQosome complex which is responsible for the biogenesis of several protein complexes and which consists of R2TP complex members RUVBL1, RUVBL2, RPAP3 and PIH1D1, URI complex members PFDN2, PFDN6, PDRG1, UXT and URI1 as well as ASDURF, POLR2E and DNAAF10/WDR92. Interacts with PIH1D1. Interacts with ITFG1. Interacts with WAC; WAC positively regulates MTOR activity by promoting the assembly of the TTT complex composed of TELO2, TTI1 and TTI2 and the RUVBL complex composed of RUVBL1 and RUVBL2 into the TTT-RUVBL complex which leads to the dimerization of the mTORC1 complex and its subsequent activation. The RUVBL1/RUVBL2 complex interacts with ZNHIT1 (via HIT-type zinc finger), ZNHIT3 (via HIT-type zinc finger), ZNHIT6 (via HIT-type zinc finger) and DDX59/ZNHIT5 (via HIT-type zinc finger) in the presence of ADP. Interacts with NOPCHAP1; the interaction is direct and disrupted upon ATP binding. Interacts with SMG1. Interacts with NOP2, NOP56 and NUFIP1.

Its subcellular location is the nucleus matrix. The protein localises to the nucleus. It localises to the nucleoplasm. It is found in the cytoplasm. The protein resides in the membrane. Its subcellular location is the cytoskeleton. The protein localises to the microtubule organizing center. It localises to the centrosome. It is found in the dynein axonemal particle. The catalysed reaction is ATP + H2O = ADP + phosphate + H(+). In terms of biological role, possesses single-stranded DNA-stimulated ATPase and ATP-dependent DNA helicase (3' to 5') activity; hexamerization is thought to be critical for ATP hydrolysis and adjacent subunits in the ring-like structure contribute to the ATPase activity. Component of the NuA4 histone acetyltransferase complex which is involved in transcriptional activation of select genes principally by acetylation of nucleosomal histones H4 and H2A. This modification may both alter nucleosome-DNA interactions and promote interaction of the modified histones with other proteins which positively regulate transcription. This complex may be required for the activation of transcriptional programs associated with oncogene and proto-oncogene mediated growth induction, tumor suppressor mediated growth arrest and replicative senescence, apoptosis, and DNA repair. The NuA4 complex ATPase and helicase activities seem to be, at least in part, contributed by the association of RUVBL1 and RUVBL2 with EP400. NuA4 may also play a direct role in DNA repair when recruited to sites of DNA damage. Component of a SWR1-like complex that specifically mediates the removal of histone H2A.Z/H2AZ1 from the nucleosome. Proposed core component of the chromatin remodeling INO80 complex which exhibits DNA- and nucleosome-activated ATPase activity and catalyzes ATP-dependent nucleosome sliding. Plays an essential role in oncogenic transformation by MYC and also modulates transcriptional activation by the LEF1/TCF1-CTNNB1 complex. Essential for cell proliferation. May be able to bind plasminogen at cell surface and enhance plasminogen activation. This chain is RuvB-like 1 (Ruvbl1), found in Mus musculus (Mouse).